The primary structure comprises 569 residues: Urease subunit beta (569 aa).

Residues 131–569 (GGIDTHIHFI…VSLAQLFSIF (439 aa)) enclose the Urease domain. Histidine 136, histidine 138, and lysine 219 together coordinate Ni(2+). N6-carboxylysine is present on lysine 219. Residue histidine 221 coordinates substrate. Residues histidine 248 and histidine 274 each coordinate Ni(2+). Catalysis depends on histidine 322, which acts as the Proton donor. Aspartate 362 provides a ligand contact to Ni(2+).

It belongs to the metallo-dependent hydrolases superfamily. Urease alpha subunit family. In terms of assembly, heterohexamer of 3 UreA (alpha) and 3 UreB (beta) subunits. Ni cation serves as cofactor. Post-translationally, carboxylation allows a single lysine to coordinate two nickel ions.

It is found in the cytoplasm. It carries out the reaction urea + 2 H2O + H(+) = hydrogencarbonate + 2 NH4(+). It participates in nitrogen metabolism; urea degradation; CO(2) and NH(3) from urea (urease route): step 1/1. In Helicobacter pylori (strain P12), this protein is Urease subunit beta.